The sequence spans 115 residues: NADH-ubiquinone oxidoreductase chain 3 (115 aa).

3 consecutive transmembrane segments (helical) span residues 3–23 (LMITLLTNTMLTSLMVLIAFW), 55–75 (FFLVAITFLLFDLEIALLLPL), and 86–106 (LTLLMSFMLIILLAIGLAYEW).

It belongs to the complex I subunit 3 family. In terms of assembly, core subunit of respiratory chain NADH dehydrogenase (Complex I) which is composed of 45 different subunits. Interacts with TMEM186. Interacts with TMEM242.

Its subcellular location is the mitochondrion inner membrane. The enzyme catalyses a ubiquinone + NADH + 5 H(+)(in) = a ubiquinol + NAD(+) + 4 H(+)(out). Functionally, core subunit of the mitochondrial membrane respiratory chain NADH dehydrogenase (Complex I) which catalyzes electron transfer from NADH through the respiratory chain, using ubiquinone as an electron acceptor. Essential for the catalytic activity of complex I. The chain is NADH-ubiquinone oxidoreductase chain 3 from Loxodonta africana (African elephant).